The following is a 355-amino-acid chain: Putative cyclin-A3-1 (355 aa).

This sequence belongs to the cyclin family. Cyclin AB subfamily.

This chain is Putative cyclin-A3-1 (CYCA3-1), found in Arabidopsis thaliana (Mouse-ear cress).